Consider the following 67-residue polypeptide: Large ribosomal subunit protein uL29 (67 aa).

It belongs to the universal ribosomal protein uL29 family.

The sequence is that of Large ribosomal subunit protein uL29 from Wolbachia sp. subsp. Drosophila simulans (strain wRi).